Here is a 349-residue protein sequence, read N- to C-terminus: UDP-3-O-acylglucosamine N-acyltransferase (349 aa).

The Proton acceptor role is filled by His-246.

Belongs to the transferase hexapeptide repeat family. LpxD subfamily. In terms of assembly, homotrimer.

It carries out the reaction a UDP-3-O-[(3R)-3-hydroxyacyl]-alpha-D-glucosamine + a (3R)-hydroxyacyl-[ACP] = a UDP-2-N,3-O-bis[(3R)-3-hydroxyacyl]-alpha-D-glucosamine + holo-[ACP] + H(+). Its pathway is bacterial outer membrane biogenesis; LPS lipid A biosynthesis. Functionally, catalyzes the N-acylation of UDP-3-O-acylglucosamine using 3-hydroxyacyl-ACP as the acyl donor. Is involved in the biosynthesis of lipid A, a phosphorylated glycolipid that anchors the lipopolysaccharide to the outer membrane of the cell. The sequence is that of UDP-3-O-acylglucosamine N-acyltransferase from Nostoc sp. (strain PCC 7120 / SAG 25.82 / UTEX 2576).